The chain runs to 686 residues: Translation initiation factor IF-2 (686 aa).

Residues 54-105 (KPSVADEFEVEEKVVRSKKNSNKKKKKGKGNEDKRQENFAGRQQTQTVETPD) form a disordered region. Residues 69 to 81 (RSKKNSNKKKKKG) show a composition bias toward basic residues. A tr-type G domain is found at 188–357 (ERPAVVTIMG…LLVSEVEEYK (170 aa)). Residues 197–204 (GHVDHGKT) form a G1 region. Residue 197–204 (GHVDHGKT) coordinates GTP. The tract at residues 222–226 (GITQH) is G2. Positions 243–246 (DTPG) are G3. GTP is bound by residues 243–247 (DTPGH) and 297–300 (NKMD). The segment at 297 to 300 (NKMD) is G4. Residues 333-335 (SAI) are G5.

Belongs to the TRAFAC class translation factor GTPase superfamily. Classic translation factor GTPase family. IF-2 subfamily.

The protein localises to the cytoplasm. One of the essential components for the initiation of protein synthesis. Protects formylmethionyl-tRNA from spontaneous hydrolysis and promotes its binding to the 30S ribosomal subunits. Also involved in the hydrolysis of GTP during the formation of the 70S ribosomal complex. This Bacillus cereus (strain 03BB102) protein is Translation initiation factor IF-2.